Here is a 206-residue protein sequence, read N- to C-terminus: MRASAGERERVEALYAWERRLQRQGVARIAGVDEAGRGPLAGPVTAAAVILPPGLFIAGLNDSKKVPPARRRELAAVIKKESLAWGIGWVSVKEIDCLNILAASRWAMRRALSALAIRPDHVLIDGMELPGLKIPQTPLVGGDALSASIAAASILAKVARDELMVAYDAVFQGYGLAGNKGYPTREHREALRRLGPCALHRRSFKH.

One can recognise an RNase H type-2 domain in the interval 27-206 (ARIAGVDEAG…CALHRRSFKH (180 aa)). A divalent metal cation-binding residues include aspartate 33, glutamate 34, and aspartate 125.

This sequence belongs to the RNase HII family. Mn(2+) is required as a cofactor. Mg(2+) serves as cofactor.

It is found in the cytoplasm. It catalyses the reaction Endonucleolytic cleavage to 5'-phosphomonoester.. Endonuclease that specifically degrades the RNA of RNA-DNA hybrids. The polypeptide is Ribonuclease HII (Moorella thermoacetica (strain ATCC 39073 / JCM 9320)).